A 233-amino-acid chain; its full sequence is Histone H1-I (233 aa).

2 disordered regions span residues 1 to 55 and 115 to 233; these read MSDS…HPPV and TGAS…KKSK. Low complexity predominate over residues 17–29; sequence KAASPAKSPAKSP. An H15 domain is found at 51-125; the sequence is THPPVSEMVV…GASGSFKMPP (75 aa). 2 stretches are compositionally biased toward basic and acidic residues: residues 128 to 137 and 146 to 155; these read KKVDRPESAP and TRVERKEKKV. Composition is skewed to basic residues over residues 172–213 and 223–233; these read AAKK…KPTP and AAARKPAKKSK.

The protein belongs to the histone H1/H5 family.

The protein resides in the nucleus. It localises to the chromosome. Histones H1 are necessary for the condensation of nucleosome chains into higher-order structures. The sequence is that of Histone H1-I from Glyptotendipes barbipes (Midge).